Here is a 462-residue protein sequence, read N- to C-terminus: ATP synthase subunit beta (462 aa).

149 to 156 (GGAGVGKT) is an ATP binding site.

It belongs to the ATPase alpha/beta chains family. In terms of assembly, F-type ATPases have 2 components, CF(1) - the catalytic core - and CF(0) - the membrane proton channel. CF(1) has five subunits: alpha(3), beta(3), gamma(1), delta(1), epsilon(1). CF(0) has three main subunits: a(1), b(2) and c(9-12). The alpha and beta chains form an alternating ring which encloses part of the gamma chain. CF(1) is attached to CF(0) by a central stalk formed by the gamma and epsilon chains, while a peripheral stalk is formed by the delta and b chains.

The protein localises to the cell inner membrane. The enzyme catalyses ATP + H2O + 4 H(+)(in) = ADP + phosphate + 5 H(+)(out). Produces ATP from ADP in the presence of a proton gradient across the membrane. The catalytic sites are hosted primarily by the beta subunits. This chain is ATP synthase subunit beta, found in Fusobacterium nucleatum subsp. nucleatum (strain ATCC 25586 / DSM 15643 / BCRC 10681 / CIP 101130 / JCM 8532 / KCTC 2640 / LMG 13131 / VPI 4355).